The following is a 1391-amino-acid chain: DNA-directed RNA polymerase subunit beta' (1391 aa).

Zn(2+) is bound by residues Cys72, Cys74, Cys87, and Cys90. Asp462, Asp464, and Asp466 together coordinate Mg(2+). Residues Cys816, Cys890, Cys897, and Cys900 each contribute to the Zn(2+) site.

The protein belongs to the RNA polymerase beta' chain family. The RNAP catalytic core consists of 2 alpha, 1 beta, 1 beta' and 1 omega subunit. When a sigma factor is associated with the core the holoenzyme is formed, which can initiate transcription. The cofactor is Mg(2+). Zn(2+) serves as cofactor.

It catalyses the reaction RNA(n) + a ribonucleoside 5'-triphosphate = RNA(n+1) + diphosphate. DNA-dependent RNA polymerase catalyzes the transcription of DNA into RNA using the four ribonucleoside triphosphates as substrates. The protein is DNA-directed RNA polymerase subunit beta' of Neisseria gonorrhoeae (strain NCCP11945).